The sequence spans 92 residues: LYR motif-containing protein 4 homolog (92 aa).

The stretch at 48–68 (AEIDRQMAEGQQNLELIRRQV) forms a coiled coil.

Belongs to the complex I LYR family. In terms of assembly, component of the mitochondrial core iron-sulfur cluster (ISC) assembly complex at least composed of the cysteine desulfurase Nfs1, the scaffold protein IscU, the accessory protein bcn92/Isd11/Lyrm4, and probably fh/frataxin. Interacts with Nfs1.

The protein resides in the mitochondrion. Its function is as follows. Stabilizing factor of the core iron-sulfur cluster (ISC) assembly complex that regulates the stability and cysteine desulfurase activity of Nfs1 and participates in the [2Fe-2S] clusters assembly on the scaffolding protein IscU. This Drosophila melanogaster (Fruit fly) protein is LYR motif-containing protein 4 homolog.